A 293-amino-acid chain; its full sequence is Methylsterol monooxygenase 1 (293 aa).

2 helical membrane passes run Leu-55–Ile-75 and Val-100–Thr-120. One can recognise a Fatty acid hydroxylase domain in the interval Cys-145 to Thr-274. The Histidine box-1 motif lies at His-157–His-161. Residues His-170 to His-174 carry the Histidine box-2 motif. The helical transmembrane segment at Phe-199–Ile-219 threads the bilayer. The Histidine box-3 signature appears at His-249–Met-255.

This sequence belongs to the sterol desaturase family. The cofactor is Fe cation. Post-translationally, ubiquitinated by MARCHF6, leading to proteasomal degradation.

The protein resides in the endoplasmic reticulum membrane. It catalyses the reaction 4,4-dimethyl-5alpha-cholest-7-en-3beta-ol + 6 Fe(II)-[cytochrome b5] + 3 O2 + 5 H(+) = 4alpha-carboxy-4beta-methyl-5alpha-cholest-7-ene-3beta-ol + 6 Fe(III)-[cytochrome b5] + 4 H2O. The enzyme catalyses 4,4-dimethyl-5alpha-cholesta-8,24-dien-3beta-ol + 6 Fe(II)-[cytochrome b5] + 3 O2 + 5 H(+) = 4beta-methylzymosterol-4alpha-carboxylate + 6 Fe(III)-[cytochrome b5] + 4 H2O. The catalysed reaction is 4alpha-methylzymosterol + 6 Fe(II)-[cytochrome b5] + 3 O2 + 5 H(+) = 4alpha-carboxyzymosterol + 6 Fe(III)-[cytochrome b5] + 4 H2O. It carries out the reaction 4alpha-methyl-5alpha-cholest-7-en-3beta-ol + 6 Fe(II)-[cytochrome b5] + 3 O2 + 5 H(+) = 4alpha-carboxy-5alpha-cholest-7-en-3beta-ol + 6 Fe(III)-[cytochrome b5] + 4 H2O. It catalyses the reaction 4,4-dimethyl-5alpha-cholest-8-en-3beta-ol + 6 Fe(II)-[cytochrome b5] + 3 O2 + 5 H(+) = 4alpha-carboxy-4beta-methyl-5alpha-cholest-8-en-3beta-ol + 6 Fe(III)-[cytochrome b5] + 4 H2O. The enzyme catalyses 4alpha-methyl-5alpha-cholest-8-en-3beta-ol + 6 Fe(II)-[cytochrome b5] + 3 O2 + 5 H(+) = 4alpha-carboxy-5alpha-cholest-8-ene-3beta-ol + 6 Fe(III)-[cytochrome b5] + 4 H2O. It functions in the pathway steroid biosynthesis; zymosterol biosynthesis; zymosterol from lanosterol: step 3/6. The protein operates within steroid biosynthesis; cholesterol biosynthesis. Its function is as follows. Catalyzes the three-step monooxygenation required for the demethylation of 4,4-dimethyl and 4alpha-methylsterols, which can be subsequently metabolized to cholesterol. The chain is Methylsterol monooxygenase 1 (MSMO1) from Pongo abelii (Sumatran orangutan).